We begin with the raw amino-acid sequence, 1286 residues long: CLIP-associating protein 2 (1286 aa).

The segment at 1 to 40 (MRRLICKRICDYKSFDDEESVDGNRPSSAASAFKVPAPKT) is golgi localization. Phosphoserine is present on residues serine 14 and serine 20. Residues 17 to 70 (DEESVDGNRPSSAASAFKVPAPKTPGNPVNSARKPGSAGGPKAGGTSKEGGAGA) are disordered. Residues 53-69 (SAGGPKAGGTSKEGGAG) show a composition bias toward gly residues. Residues 66 to 317 (GGAGAVDEDD…KSLQTYLKSS (252 aa)) are TOG 1. HEAT repeat units follow at residues 179-214 (HGAE…IRHT), 215-251 (HVPR…EWQT), and 256-293 (RHAA…HFPG). Disordered stretches follow at residues 320 to 350 (VASL…TANP) and 355 to 374 (GRVS…LQRS). 3 positions are modified to phosphoserine: serine 322, serine 333, and serine 336. Residues 322–340 (SLPQSDRSSSSSQESLNRP) are compositionally biased toward low complexity. A compositionally biased stretch (polar residues) spans 341–350 (FSSKWSTANP). Phosphoserine occurs at positions 374, 376, and 413. The segment at 410 to 473 (SYASLEDTSD…GSRSGSPGRV (64 aa)) is disordered. Residues 417-431 (TSDKMDGTASEDGRV) are compositionally biased toward basic and acidic residues. Residues 450–565 (RGRSRTKMVS…GPGYGMSQSS (116 aa)) form an interaction with microtubules, MAPRE1 and MAPRE3 region. The span at 459–473 (SQSQPGSRSGSPGRV) shows a compositional bias: low complexity. A phosphoserine mark is found at serine 461, serine 465, serine 469, serine 484, and serine 495. The tract at residues 492-566 (NSASAQKRSK…PGYGMSQSSR (75 aa)) is disordered. The short motif at 500–503 (SKIP) is the SXIP motif 1; mediates interaction with MAPRE1 and targeting to microtubule plus ends element. The residue at position 513 (serine 513) is a Phosphoserine. The SXIP motif 2; mediates interaction with MAPRE1 and targeting to microtubule plus ends signature appears at 523–526 (SRIP). Phosphoserine is present on residues serine 531, serine 535, serine 570, serine 572, serine 581, serine 614, and serine 620. Over residues 606 to 616 (RYESYGMHSDD) the composition is skewed to basic and acidic residues. The interval 606–638 (RYESYGMHSDDDANSDASSACSERSYSSRNGSI) is disordered. The span at 620-634 (SDASSACSERSYSSR) shows a compositional bias: low complexity. Residues 642–873 (MRQTEDVAEV…TKLLHNHLRN (232 aa)) are TOG 2. HEAT repeat units lie at residues 702 to 739 (KVFS…KMGA) and 764 to 801 (LQFN…QMDP). Position 779 is a phosphothreonine (threonine 779). The interaction with RSN and localization to the Golgi and kinetochores stretch occupies residues 864 to 1286 (TKLLHNHLRN…DPTTDVSGQS (423 aa)). Disordered regions lie at residues 870–920 (HLRN…FDYD) and 944–990 (SFRS…QPAL). 2 stretches are compositionally biased toward polar residues: residues 872–884 (RNTG…SMGS) and 893–914 (SPAN…TLSP). Serine 884 carries the phosphoserine modification. Serine 944, serine 947, serine 1005, and serine 1021 each carry phosphoserine. Positions 947–964 (SQEDMSEPLKRDPKKEDG) are enriched in basic and acidic residues. Residues 1009–1286 (RDYNPYNYSD…DPTTDVSGQS (278 aa)) are required for cortical localization. HEAT repeat units follow at residues 1046-1083 (LDHS…TQEE), 1090-1127 (EHFK…HQPA), and 1208-1245 (LLLP…VIGD).

This sequence belongs to the CLASP family. In terms of assembly, interacts with microtubules. Interacts with MAPRE1; probably required for targeting to the growing microtubule plus ends. Interacts with CLIP2, ERC1, MAPRE3, PHLDB2 and RSN. The interaction with ERC1 may be mediated by PHLDB2. Interacts with GCC2; recruits CLASP2 to Golgi membranes. Interacts with MACF1. Interacts with SOGA1 and MTCL1. Post-translationally, phosphorylated by GSK3B. Phosphorylation by GSK3B may negatively regulate binding to microtubule lattices in lamella.

Its subcellular location is the cytoplasm. It localises to the cytoskeleton. The protein localises to the microtubule organizing center. The protein resides in the centrosome. It is found in the chromosome. Its subcellular location is the centromere. It localises to the kinetochore. The protein localises to the spindle. The protein resides in the golgi apparatus. It is found in the trans-Golgi network. Its subcellular location is the cell membrane. It localises to the cell projection. The protein localises to the ruffle membrane. The protein resides in the cell cortex. In terms of biological role, microtubule plus-end tracking protein that promotes the stabilization of dynamic microtubules. Involved in the nucleation of noncentrosomal microtubules originating from the trans-Golgi network (TGN). Required for the polarization of the cytoplasmic microtubule arrays in migrating cells towards the leading edge of the cell. May act at the cell cortex to enhance the frequency of rescue of depolymerizing microtubules by attaching their plus-ends to cortical platforms composed of ERC1 and PHLDB2. This cortical microtubule stabilizing activity is regulated at least in part by phosphatidylinositol 3-kinase signaling. Also performs a similar stabilizing function at the kinetochore which is essential for the bipolar alignment of chromosomes on the mitotic spindle. Acts as a mediator of ERBB2-dependent stabilization of microtubules at the cell cortex. In Rattus norvegicus (Rat), this protein is CLIP-associating protein 2 (Clasp2).